The chain runs to 858 residues: G2-specific protein kinase nim-1 (858 aa).

In terms of domain architecture, Protein kinase spans 7-290 (YELLEKIGHG…TATLLNLPIV (284 aa)). ATP contacts are provided by residues 13–21 (IGHGSFGII) and Lys-36. Catalysis depends on Asp-161, which acts as the Proton acceptor. At Thr-194 the chain carries Phosphothreonine; by autocatalysis. The stretch at 291 to 383 (RLMRKEKEVV…QARVEAELQR (93 aa)) forms a coiled coil. Disordered stretches follow at residues 495 to 693 (TKAP…LPQA) and 747 to 858 (SAVD…LSQS). The segment covering 516–525 (SNWEVPRETE) has biased composition (basic and acidic residues). Positions 526–535 (MIDSGDESEA) are enriched in acidic residues. Polar residues-rich tracts occupy residues 548–572 (SSKN…NSNV) and 580–598 (SKQT…SSIG). Residues 636–648 (SANNINNSSNGGS) show a composition bias toward low complexity. Residues 650–661 (APSSTVTSNITV) show a composition bias toward polar residues. A compositionally biased stretch (low complexity) spans 676 to 691 (SSFSQQQNNQPQQSLP). Residues 760 to 780 (GQSQLPTRPRSQPQPITANFE) are compositionally biased toward polar residues. Over residues 781–802 (QQQQQQQSNTNSISSSNSAGSG) the composition is skewed to low complexity.

The protein belongs to the protein kinase superfamily. CAMK Ser/Thr protein kinase family.

It localises to the nucleus. It carries out the reaction L-seryl-[protein] + ATP = O-phospho-L-seryl-[protein] + ADP + H(+). The enzyme catalyses L-threonyl-[protein] + ATP = O-phospho-L-threonyl-[protein] + ADP + H(+). Functionally, protein kinase that plays an important role in mitotic regulation. The polypeptide is G2-specific protein kinase nim-1 (nim-1) (Neurospora crassa (strain ATCC 24698 / 74-OR23-1A / CBS 708.71 / DSM 1257 / FGSC 987)).